Reading from the N-terminus, the 268-residue chain is Casein kinase II subunit beta (268 aa).

A disordered region spans residues 222 to 268 (LSNNNQNNQNNNINNNNNNNNNNNNNNNNNNNNQQNNNNQQNNNTNK). Residues 224–268 (NNNQNNQNNNINNNNNNNNNNNNNNNNNNNNQQNNNNQQNNNTNK) show a composition bias toward low complexity.

The protein belongs to the casein kinase 2 subunit beta family. In terms of assembly, casein kinase II/CK2 is a tetramer composed of two alpha subunit and two beta subunits.

In terms of biological role, regulatory subunit of casein kinase II/CK2. As part of the kinase complex regulates the basal catalytic activity of the alpha subunit a constitutively active serine/threonine-protein kinase that phosphorylates a large number of substrates containing acidic residues C-terminal to the phosphorylated serine or threonine. The polypeptide is Casein kinase II subunit beta (csnk2b) (Dictyostelium discoideum (Social amoeba)).